Reading from the N-terminus, the 216-residue chain is MLKKIIILFLGMFLLSACTDNFRSYFQRSANNRLVDSKGAKGGKRKPVYNNKYITLAKKNIVEDNLDDDNDDDYDSDSPLRGERIDPVKRNREMYLKMIKRDIARQKAEAGFAESDDDMTLSRANKKVRKDDSDKEKKIQEELNQIKAMLRETKRDISKYTCPNAVVNQNYAPPVTNYEPVNYPPVKNSKPYNNNSKVKQKFILEDDDNGSNACSI.

The first 17 residues, 1 to 17 (MLKKIIILFLGMFLLSA), serve as a signal peptide directing secretion. Cysteine 18 carries N-palmitoyl cysteine lipidation. Cysteine 18 carries S-diacylglycerol cysteine lipidation. Positions 133–162 (SDKEKKIQEELNQIKAMLRETKRDISKYTC) form a coiled coil.

It is found in the cell membrane. This is an uncharacterized protein from Rickettsia conorii (strain ATCC VR-613 / Malish 7).